Consider the following 330-residue polypeptide: Ketol-acid reductoisomerase (NADP(+)) (330 aa).

Positions 1 to 181 (MNVYYEKDAD…GGTKAGVIET (181 aa)) constitute a KARI N-terminal Rossmann domain. NADP(+) contacts are provided by residues 24–27 (YGSQ), R47, S50, S52, and 82–85 (DQNQ). H107 is an active-site residue. Position 133 (G133) interacts with NADP(+). Residues 182–327 (NFKNETETDL…AKLRNMMSWL (146 aa)) enclose the KARI C-terminal knotted domain. The Mg(2+) site is built by D190, E194, E226, and E230. S251 is a substrate binding site.

The protein belongs to the ketol-acid reductoisomerase family. The cofactor is Mg(2+).

The catalysed reaction is (2R)-2,3-dihydroxy-3-methylbutanoate + NADP(+) = (2S)-2-acetolactate + NADPH + H(+). It catalyses the reaction (2R,3R)-2,3-dihydroxy-3-methylpentanoate + NADP(+) = (S)-2-ethyl-2-hydroxy-3-oxobutanoate + NADPH + H(+). It functions in the pathway amino-acid biosynthesis; L-isoleucine biosynthesis; L-isoleucine from 2-oxobutanoate: step 2/4. The protein operates within amino-acid biosynthesis; L-valine biosynthesis; L-valine from pyruvate: step 2/4. Functionally, involved in the biosynthesis of branched-chain amino acids (BCAA). Catalyzes an alkyl-migration followed by a ketol-acid reduction of (S)-2-acetolactate (S2AL) to yield (R)-2,3-dihydroxy-isovalerate. In the isomerase reaction, S2AL is rearranged via a Mg-dependent methyl migration to produce 3-hydroxy-3-methyl-2-ketobutyrate (HMKB). In the reductase reaction, this 2-ketoacid undergoes a metal-dependent reduction by NADPH to yield (R)-2,3-dihydroxy-isovalerate. The sequence is that of Ketol-acid reductoisomerase (NADP(+)) from Chlorobium chlorochromatii (strain CaD3).